Reading from the N-terminus, the 218-residue chain is Small ribosomal subunit protein uS3c (218 aa).

The 72-residue stretch at 47-118 folds into the KH type-2 domain; that stretch reads VQKNIRISSG…KLNIAITRIS (72 aa).

Belongs to the universal ribosomal protein uS3 family. In terms of assembly, part of the 30S ribosomal subunit.

It localises to the plastid. Its subcellular location is the chloroplast. The chain is Small ribosomal subunit protein uS3c (rps3) from Crucihimalaya wallichii (Rock-cress).